A 134-amino-acid chain; its full sequence is Profilin-2 (134 aa).

Cys13 and Cys118 form a disulfide bridge. Residues 84-100 (AVIRGKKGSGGITIKKT) carry the Involved in PIP2 interaction motif. A Phosphothreonine modification is found at Thr114.

Belongs to the profilin family. In terms of assembly, occurs in many kinds of cells as a complex with monomeric actin in a 1:1 ratio. Phosphorylated by MAP kinases.

It is found in the cytoplasm. The protein localises to the cytoskeleton. In terms of biological role, binds to actin and affects the structure of the cytoskeleton. At high concentrations, profilin prevents the polymerization of actin, whereas it enhances it at low concentrations. By binding to PIP2, it inhibits the formation of IP3 and DG. The sequence is that of Profilin-2 (PRO2) from Olea europaea (Common olive).